The primary structure comprises 137 residues: Basic phospholipase A2 beta-bungarotoxin A1 chain (137 aa).

The first 9 residues, 1–9 (AVCVSLLGA), serve as a signal peptide directing secretion. The propeptide occupies 10 to 17 (ANIPPHPL). Intrachain disulfides connect C44-C136, C46-C62, C61-C117, C68-C110, C78-C103, and C96-C108. Ca(2+) contacts are provided by Y45, G47, and G49. The active site involves H65. D66 lines the Ca(2+) pocket. D111 is a catalytic residue.

Belongs to the phospholipase A2 family. Group I subfamily. D49 sub-subfamily. As to quaternary structure, heterodimer; disulfide-linked. The A chain has phospholipase A2 activity and the B chain shows homology with the basic protease inhibitors. The cofactor is Ca(2+). Expressed by the venom gland.

It localises to the secreted. It carries out the reaction a 1,2-diacyl-sn-glycero-3-phosphocholine + H2O = a 1-acyl-sn-glycero-3-phosphocholine + a fatty acid + H(+). In terms of biological role, snake venom phospholipase A2 (PLA2) that shows presynaptic neurotoxicity. The A chain has phospholipase activity. PLA2 catalyzes the calcium-dependent hydrolysis of the 2-acyl groups in 3-sn-phosphoglycerides. This is Basic phospholipase A2 beta-bungarotoxin A1 chain from Bungarus candidus (Malayan krait).